The primary structure comprises 113 residues: Small ribosomal subunit protein bS6 (113 aa).

Belongs to the bacterial ribosomal protein bS6 family.

Its function is as follows. Binds together with bS18 to 16S ribosomal RNA. The protein is Small ribosomal subunit protein bS6 of Wigglesworthia glossinidia brevipalpis.